The primary structure comprises 463 residues: Glutamate--tRNA ligase 1 (463 aa).

The short motif at 10–20 (PSPTGYLHIGG) is the 'HIGH' region element. Residues 238-242 (KLSKR) carry the 'KMSKS' region motif. An ATP-binding site is contributed by lysine 241.

This sequence belongs to the class-I aminoacyl-tRNA synthetase family. Glutamate--tRNA ligase type 1 subfamily. As to quaternary structure, monomer.

The protein resides in the cytoplasm. The enzyme catalyses tRNA(Glu) + L-glutamate + ATP = L-glutamyl-tRNA(Glu) + AMP + diphosphate. Its function is as follows. Catalyzes the attachment of glutamate to tRNA(Glu) in a two-step reaction: glutamate is first activated by ATP to form Glu-AMP and then transferred to the acceptor end of tRNA(Glu). This Helicobacter pylori (strain ATCC 700392 / 26695) (Campylobacter pylori) protein is Glutamate--tRNA ligase 1.